Consider the following 328-residue polypeptide: uncharacterized protein (328 aa).

The G-patch domain maps to 10-55 (KMGFGHAMLLKMGWKGKGLGVEEDGRTEIIVNKKKQDKVGVGASIS). Positions 97–291 (EKITFKRTIK…KKSFSVSKTR (195 aa)) are disordered. The span at 101 to 110 (FKRTIKKNSK) shows a compositional bias: basic residues. Acidic residues predominate over residues 116 to 126 (SDSDSDSDSES). Low complexity-rich tracts occupy residues 141 to 158 (DSDS…SSSS) and 210 to 240 (SSSS…SSSE). The span at 248–257 (KNKNKNKNKK) shows a compositional bias: basic residues.

This is an uncharacterized protein from Dictyostelium discoideum (Social amoeba).